The sequence spans 314 residues: MMMVLRNLSMEPTFALLGFTDYPKLQIPLFLVFLLMYVITVVGNLGMIIIIKINPKFHTPMYFFLSHLSFVDFCYSSIVTPKLLENLVMADKSIFYFSCMMQYFLSCTAVVTESFLLAVMAYDRFVAICNPLLYTVAMSQRLCALLVAGSYLWGMFGPLVLLCYALRLNFSGPNVINHFFCEYTALISVSGSDILIPHLLLFSFATFNEMCTLLIILTSYVFIFVTVLKIRSVSGRHKAFSTWASHLTSITIFHGTILFLYCVPNSKNSRQTVKVASVFYTVVNPMLNPLIYSLRNKDVKDAFWKLIHTQVPFH.

Residues 1–27 (MMMVLRNLSMEPTFALLGFTDYPKLQI) are Extracellular-facing. N-linked (GlcNAc...) asparagine glycosylation is present at Asn7. The helical transmembrane segment at 28 to 48 (PLFLVFLLMYVITVVGNLGMI) threads the bilayer. Topologically, residues 49-56 (IIIKINPK) are cytoplasmic. The chain crosses the membrane as a helical span at residues 57–77 (FHTPMYFFLSHLSFVDFCYSS). Over 78–101 (IVTPKLLENLVMADKSIFYFSCMM) the chain is Extracellular. Residues 102–122 (QYFLSCTAVVTESFLLAVMAY) traverse the membrane as a helical segment. Topologically, residues 123–141 (DRFVAICNPLLYTVAMSQR) are cytoplasmic. Residues 142–162 (LCALLVAGSYLWGMFGPLVLL) form a helical membrane-spanning segment. The Extracellular portion of the chain corresponds to 163 to 198 (CYALRLNFSGPNVINHFFCEYTALISVSGSDILIPH). N-linked (GlcNAc...) asparagine glycosylation occurs at Asn169. A helical membrane pass occupies residues 199–219 (LLLFSFATFNEMCTLLIILTS). Over 220 to 239 (YVFIFVTVLKIRSVSGRHKA) the chain is Cytoplasmic. Residues 240–260 (FSTWASHLTSITIFHGTILFL) form a helical membrane-spanning segment. Topologically, residues 261-273 (YCVPNSKNSRQTV) are extracellular. Residues 274–294 (KVASVFYTVVNPMLNPLIYSL) form a helical membrane-spanning segment. Residues 295–314 (RNKDVKDAFWKLIHTQVPFH) are Cytoplasmic-facing.

Belongs to the G-protein coupled receptor 1 family.

The protein localises to the cell membrane. Odorant receptor. This chain is Olfactory receptor 5D14 (OR5D14), found in Homo sapiens (Human).